The chain runs to 275 residues: Phosphate import ATP-binding protein PstB (275 aa).

Residues 28–270 (MSAKNVSVFY…PREERTKDYI (243 aa)) form the ABC transporter domain. An ATP-binding site is contributed by 60-67 (GPSGCGKS).

It belongs to the ABC transporter superfamily. Phosphate importer (TC 3.A.1.7) family. In terms of assembly, the complex is composed of two ATP-binding proteins (PstB), two transmembrane proteins (PstC and PstA) and a solute-binding protein (PstS).

Its subcellular location is the cell inner membrane. The enzyme catalyses phosphate(out) + ATP + H2O = ADP + 2 phosphate(in) + H(+). Part of the ABC transporter complex PstSACB involved in phosphate import. Responsible for energy coupling to the transport system. The protein is Phosphate import ATP-binding protein PstB of Novosphingobium aromaticivorans (strain ATCC 700278 / DSM 12444 / CCUG 56034 / CIP 105152 / NBRC 16084 / F199).